Consider the following 715-residue polypeptide: Polyribonucleotide nucleotidyltransferase (715 aa).

Residues aspartate 487 and aspartate 493 each coordinate Mg(2+). Positions proline 554 to isoleucine 613 constitute a KH domain. Residues asparagine 623–lysine 691 form the S1 motif domain. The tract at residues glutamate 696 to glutamate 715 is disordered.

Belongs to the polyribonucleotide nucleotidyltransferase family. Requires Mg(2+) as cofactor.

The protein localises to the cytoplasm. It carries out the reaction RNA(n+1) + phosphate = RNA(n) + a ribonucleoside 5'-diphosphate. In terms of biological role, involved in mRNA degradation. Catalyzes the phosphorolysis of single-stranded polyribonucleotides processively in the 3'- to 5'-direction. This is Polyribonucleotide nucleotidyltransferase from Rhodopseudomonas palustris (strain BisB18).